The chain runs to 109 residues: MSSKQQLACTYAALILADSGKTDMDSLLKVTKAAGVDVSKGMASAFASILKNVDINDVLSKVSFGGVAPAAGGATAAPAAAAAAAAPAAAAAKKEEEEEDDDMGFGLFD.

Residues 90-109 (AAAKKEEEEEDDDMGFGLFD) form a disordered region.

This sequence belongs to the eukaryotic ribosomal protein P1/P2 family. In terms of assembly, P1 and P2 exist as dimers at the large ribosomal subunit.

In terms of biological role, plays an important role in the elongation step of protein synthesis. This Trypanosoma cruzi protein is Large ribosomal subunit protein P1.